Here is a 144-residue protein sequence, read N- to C-terminus: Large ribosomal subunit protein eL27 (144 aa).

Positions 6–43 (IKPGRLVILLNGKYAGRKAVVIKTFDDATASKSRPYGH) constitute a KOW domain.

The protein belongs to the eukaryotic ribosomal protein eL27 family.

The chain is Large ribosomal subunit protein eL27 (rpl27) from Dictyostelium discoideum (Social amoeba).